The primary structure comprises 285 residues: Phosphatidylserine decarboxylase proenzyme (285 aa).

Catalysis depends on charge relay system; for autoendoproteolytic cleavage activity residues Asp89, His146, and Ser252. Ser252 functions as the Schiff-base intermediate with substrate; via pyruvic acid; for decarboxylase activity in the catalytic mechanism. The residue at position 252 (Ser252) is a Pyruvic acid (Ser); by autocatalysis.

It belongs to the phosphatidylserine decarboxylase family. PSD-B subfamily. Prokaryotic type I sub-subfamily. As to quaternary structure, heterodimer of a large membrane-associated beta subunit and a small pyruvoyl-containing alpha subunit. Pyruvate serves as cofactor. Post-translationally, is synthesized initially as an inactive proenzyme. Formation of the active enzyme involves a self-maturation process in which the active site pyruvoyl group is generated from an internal serine residue via an autocatalytic post-translational modification. Two non-identical subunits are generated from the proenzyme in this reaction, and the pyruvate is formed at the N-terminus of the alpha chain, which is derived from the carboxyl end of the proenzyme. The autoendoproteolytic cleavage occurs by a canonical serine protease mechanism, in which the side chain hydroxyl group of the serine supplies its oxygen atom to form the C-terminus of the beta chain, while the remainder of the serine residue undergoes an oxidative deamination to produce ammonia and the pyruvoyl prosthetic group on the alpha chain. During this reaction, the Ser that is part of the protease active site of the proenzyme becomes the pyruvoyl prosthetic group, which constitutes an essential element of the active site of the mature decarboxylase.

The protein resides in the cell membrane. The enzyme catalyses a 1,2-diacyl-sn-glycero-3-phospho-L-serine + H(+) = a 1,2-diacyl-sn-glycero-3-phosphoethanolamine + CO2. Its pathway is phospholipid metabolism; phosphatidylethanolamine biosynthesis; phosphatidylethanolamine from CDP-diacylglycerol: step 2/2. In terms of biological role, catalyzes the formation of phosphatidylethanolamine (PtdEtn) from phosphatidylserine (PtdSer). This Vibrio vulnificus (strain CMCP6) protein is Phosphatidylserine decarboxylase proenzyme.